The chain runs to 1356 residues: RHO1 GDP-GTP exchange protein 2 (1356 aa).

Ser2 carries the post-translational modification N-acetylserine. Disordered regions lie at residues 74 to 94 (RRSG…EMKG) and 109 to 175 (EVPD…PRNE). A Phosphoserine modification is found at Ser76. Polar residues-rich tracts occupy residues 109–125 (EVPD…TPVS) and 147–157 (HIYSTSNSASR). At Ser193 the chain carries Phosphoserine. Disordered stretches follow at residues 202–291 (LKKQ…RSMS), 303–362 (SFQS…SSSN), 383–409 (SVSG…VMSA), 531–571 (GNHS…SQQK), and 626–645 (NISM…TSSV). Positions 204–221 (KQSSFSTGSASTTPTQAR) are enriched in polar residues. Ser223 is modified (phosphoserine). Basic and acidic residues predominate over residues 235-244 (SSKDLHEQHQ). A compositionally biased stretch (low complexity) spans 250 to 265 (QHNNINNHNNNNTNNN). The segment covering 271-281 (VGSSNSNYPQH) has biased composition (polar residues). A compositionally biased stretch (low complexity) spans 282 to 291 (SHSISSRSMS). Residues 303-325 (SFQSKTSNSRKATQKYDITSNPF) are compositionally biased toward polar residues. Positions 329-338 (HHHHHHHHSS) are enriched in basic residues. Composition is skewed to low complexity over residues 339 to 362 (NSHS…SSSN) and 383 to 401 (SVSG…TPLS). A phosphoserine mark is found at Ser566 and Ser628. Positions 659-846 (KRQEAIYEVY…RDFMKRIDQA (188 aa)) constitute a DH domain. In terms of domain architecture, CNH spans 1034-1336 (TNKINSVTSC…RLLQTSTQEI (303 aa)).

Its function is as follows. Stimulates the exchange of RHO1 GDP-bound form into GTP-bound form. In Saccharomyces cerevisiae (strain ATCC 204508 / S288c) (Baker's yeast), this protein is RHO1 GDP-GTP exchange protein 2 (ROM2).